A 361-amino-acid polypeptide reads, in one-letter code: Histidinol-phosphate aminotransferase (361 aa).

At Lys-219 the chain carries N6-(pyridoxal phosphate)lysine.

The protein belongs to the class-II pyridoxal-phosphate-dependent aminotransferase family. Histidinol-phosphate aminotransferase subfamily. Homodimer. Requires pyridoxal 5'-phosphate as cofactor.

The enzyme catalyses L-histidinol phosphate + 2-oxoglutarate = 3-(imidazol-4-yl)-2-oxopropyl phosphate + L-glutamate. Its pathway is amino-acid biosynthesis; L-histidine biosynthesis; L-histidine from 5-phospho-alpha-D-ribose 1-diphosphate: step 7/9. This Acinetobacter baumannii (strain SDF) protein is Histidinol-phosphate aminotransferase.